The following is a 76-amino-acid chain: Acyl carrier protein (76 aa).

The region spanning methionine 1 to glutamine 76 is the Carrier domain. At serine 36 the chain carries O-(pantetheine 4'-phosphoryl)serine.

It belongs to the acyl carrier protein (ACP) family. Post-translationally, 4'-phosphopantetheine is transferred from CoA to a specific serine of apo-ACP by AcpS. This modification is essential for activity because fatty acids are bound in thioester linkage to the sulfhydryl of the prosthetic group.

The protein localises to the cytoplasm. The protein operates within lipid metabolism; fatty acid biosynthesis. Its function is as follows. Carrier of the growing fatty acid chain in fatty acid biosynthesis. This chain is Acyl carrier protein, found in Nitratidesulfovibrio vulgaris (strain ATCC 29579 / DSM 644 / CCUG 34227 / NCIMB 8303 / VKM B-1760 / Hildenborough) (Desulfovibrio vulgaris).